The chain runs to 912 residues: Isoleucine--tRNA ligase (912 aa).

Positions 57–67 match the 'HIGH' region motif; the sequence is PYANGDIHLGT. Glu-549 contacts L-isoleucyl-5'-AMP. Residues 590–594 carry the 'KMSKS' region motif; the sequence is KMSKS. Lys-593 provides a ligand contact to ATP. Zn(2+) contacts are provided by Cys-880, Cys-883, Cys-900, and Cys-903.

This sequence belongs to the class-I aminoacyl-tRNA synthetase family. IleS type 1 subfamily. In terms of assembly, monomer. Zn(2+) serves as cofactor.

It is found in the cytoplasm. It catalyses the reaction tRNA(Ile) + L-isoleucine + ATP = L-isoleucyl-tRNA(Ile) + AMP + diphosphate. Functionally, catalyzes the attachment of isoleucine to tRNA(Ile). As IleRS can inadvertently accommodate and process structurally similar amino acids such as valine, to avoid such errors it has two additional distinct tRNA(Ile)-dependent editing activities. One activity is designated as 'pretransfer' editing and involves the hydrolysis of activated Val-AMP. The other activity is designated 'posttransfer' editing and involves deacylation of mischarged Val-tRNA(Ile). The protein is Isoleucine--tRNA ligase of Fervidobacterium pennivorans (strain DSM 9078 / Ven5).